Reading from the N-terminus, the 209-residue chain is Uracil phosphoribosyltransferase (209 aa).

5-phospho-alpha-D-ribose 1-diphosphate-binding positions include R79, R104, and 131–139 (DPMLATGGS). Uracil is bound by residues I194 and 199–201 (GDA). 5-phospho-alpha-D-ribose 1-diphosphate is bound at residue D200.

The protein belongs to the UPRTase family. Mg(2+) serves as cofactor.

It catalyses the reaction UMP + diphosphate = 5-phospho-alpha-D-ribose 1-diphosphate + uracil. Its pathway is pyrimidine metabolism; UMP biosynthesis via salvage pathway; UMP from uracil: step 1/1. With respect to regulation, allosterically activated by GTP. Functionally, catalyzes the conversion of uracil and 5-phospho-alpha-D-ribose 1-diphosphate (PRPP) to UMP and diphosphate. This Listeria innocua serovar 6a (strain ATCC BAA-680 / CLIP 11262) protein is Uracil phosphoribosyltransferase.